A 108-amino-acid chain; its full sequence is Small ribosomal subunit protein uS17 (108 aa).

Belongs to the universal ribosomal protein uS17 family. In terms of assembly, part of the 30S ribosomal subunit.

Its function is as follows. One of the primary rRNA binding proteins, it binds specifically to the 5'-end of 16S ribosomal RNA. The sequence is that of Small ribosomal subunit protein uS17 from Methanocorpusculum labreanum (strain ATCC 43576 / DSM 4855 / Z).